We begin with the raw amino-acid sequence, 223 residues long: Ethylene-inducing xylanase 1 (223 aa).

An N-terminal signal peptide occupies residues 1-19 (MVSFTSLLAAFSVVSGVLT). In terms of domain architecture, GH11 spans 34-223 (KRTPSSTGTS…SSGSATMTVS (190 aa)). Glu119 (nucleophile) is an active-site residue. The interval 174–184 (RRTKRTSGSVN) is nuclear localization signal. Catalysis depends on Glu210, which acts as the Proton donor.

This sequence belongs to the glycosyl hydrolase 11 (cellulase G) family.

Its subcellular location is the secreted. The protein resides in the host nucleus. It catalyses the reaction Endohydrolysis of (1-&gt;4)-beta-D-xylosidic linkages in xylans.. It functions in the pathway glycan degradation; xylan degradation. Its function is as follows. Endo-1,4-beta-xylanase involved in the hydrolysis of xylan, a major structural heterogeneous polysaccharide found in plant biomass representing the second most abundant polysaccharide in the biosphere, after cellulose. Acts as an effector that localizes to the host nucleus to contribute to the virulence process. Induces host innate immunity responses; triggers BAK1-and SOBIR1-dependent cell death, salicylic acid signaling and jasmonic acid signaling. Does not exhibit any cell death when transiently expressed in N.benthamiana. This Verticillium dahliae (strain VdLs.17 / ATCC MYA-4575 / FGSC 10137) (Verticillium wilt) protein is Ethylene-inducing xylanase 1.